The primary structure comprises 154 residues: Small heat shock protein C2 (154 aa).

The sHSP domain occupies 43–154; it reads STEKNLIPRT…GKTRKIEVKG (112 aa).

It belongs to the small heat shock protein (HSP20) family.

In Rickettsia felis (strain ATCC VR-1525 / URRWXCal2) (Rickettsia azadi), this protein is Small heat shock protein C2 (hspC2).